The primary structure comprises 774 residues: MPPKKRMKNGSSLKSTSKKGEKSRNIITIQDLFSKREAQLTDTPNKLLTDHDQSASDYAYALKLQQLFDSENQATAPEKLPKDVIIPEEEYHTDTFNVVKESNDKPKENLVTSEECKASFFSTDSVNKDSTIDYDALQKDPLTYVKSCRARFVSKDTKSFSYSSLANTFSLISSTKSRIRIVTLLTNFLLTLLYADPDSLIATVWLCTNSIAPNFYGKNLGVGPAMYSKALKEVCGITASALKNLWNKYGDPGDVAFEAKVSVRTLSRPEPLTIKKVYSTLLKIADSNGNGAQNRKLELTKFLLISSNAEEVRYIGRSIMQNLRIGAVQNTMLASLSKAFFIFDNQNEIFNFNSDSLQQQFRQGEEIVKQSFFQVPDYNILVATLLREGIENLKDNMSIRPGIPVKPMLGSITKNLQHMLERLTDHNFSCEFKYDGQRAQIHCDRLGNIKIFSRHLEEITGRFPDVIEVAQLALKHSCDFIIEGELVAIDKSNGQILDFQKLSTRERKKVTVADITIDVCVFVFDIMFCDGKSCLQMPLIERRRMFFEHFNLIPNRFQFVSSLETNEEQSIQEFFSLAITNKCEGLMVKVLNGTNSKFPSTYEPDKRGEGWIKVKQDYDDEFESLDLVPIGAWYGNGRKAGWFSPILLAVYNPDTGAYEAVCKCMSGFSDQFYKELTQKYSLESGNSSLKPIYNFCETGKVTPQIYFAPQEVWEIKGAQITSSPAYKAALGLIQDDRGLSIRFPRFIRVRSDKGPEDASTNSILADMYMKQLNT.

Residues 1 to 25 are disordered; that stretch reads MPPKKRMKNGSSLKSTSKKGEKSRN. The active-site N6-AMP-lysine intermediate is the lysine 433.

Belongs to the ATP-dependent DNA ligase family.

Its subcellular location is the nucleus. It carries out the reaction ATP + (deoxyribonucleotide)n-3'-hydroxyl + 5'-phospho-(deoxyribonucleotide)m = (deoxyribonucleotide)n+m + AMP + diphosphate.. This Schizosaccharomyces pombe (strain 972 / ATCC 24843) (Fission yeast) protein is DNA ligase 3 (adl1).